The primary structure comprises 74 residues: Antimicrobial peptide AcrAP1 (74 aa).

An N-terminal signal peptide occupies residues methionine 1–alanine 22. Position 40 is a lysine amide (lysine 40). The propeptide occupies aspartate 46–tyrosine 74.

It belongs to the non-disulfide-bridged peptide (NDBP) superfamily. Short antimicrobial peptide (group 4) family. Expressed by the venom gland.

It is found in the secreted. It localises to the target cell membrane. Functionally, has antimicrobial activity against the Gram-positive bacteria S.aureus (MIC=8 uM) and the yeast C.albicans (MIC=16 uM). Causes hemolysis on horse erythrocytes (64 uM for 100% hemolysis). Minimum bactericidal concentrations have also been tested against S.aureus and is four-fold higher (MBC=32 uM). This Androctonus crassicauda (Arabian fat-tailed scorpion) protein is Antimicrobial peptide AcrAP1.